The chain runs to 96 residues: Protein Vpr (96 aa).

The homooligomerization stretch occupies residues 1–42; sequence MEQAPEDQGPQREPYNDWTLELLEELKNEAVRHFPRIWLHSL. Phosphoserine; by host is present on residues S79, S94, and S96.

It belongs to the HIV-1 VPR protein family. As to quaternary structure, homooligomer, may form homodimer. Interacts with p6-gag region of the Pr55 Gag precursor protein through a (Leu-X-X)4 motif near the C-terminus of the P6gag protein. Interacts with host UNG. May interact with host RAD23A/HHR23A. Interacts with host VPRBP/DCAF1, leading to hijack the CUL4A-RBX1-DDB1-DCAF1/VPRBP complex, mediating ubiquitination of host proteins such as TERT and ZGPAT and arrest of the cell cycle in G2 phase. Phosphorylated on several residues by host. These phosphorylations regulate VPR activity for the nuclear import of the HIV-1 pre-integration complex.

It is found in the virion. It localises to the host nucleus. Its subcellular location is the host extracellular space. Its function is as follows. During virus replication, may deplete host UNG protein, and incude G2-M cell cycle arrest. Acts by targeting specific host proteins for degradation by the 26S proteasome, through association with the cellular CUL4A-DDB1 E3 ligase complex by direct interaction with host VPRPB/DCAF-1. Cell cycle arrest reportedly occurs within hours of infection and is not blocked by antiviral agents, suggesting that it is initiated by the VPR carried into the virion. Additionally, VPR induces apoptosis in a cell cycle dependent manner suggesting that these two effects are mechanistically linked. Detected in the serum and cerebrospinal fluid of AIDS patient, VPR may also induce cell death to bystander cells. During virus entry, plays a role in the transport of the viral pre-integration (PIC) complex to the host nucleus. This function is crucial for viral infection of non-dividing macrophages. May act directly at the nuclear pore complex, by binding nucleoporins phenylalanine-glycine (FG)-repeat regions. The sequence is that of Protein Vpr from Human immunodeficiency virus type 1 group M subtype B (strain 89.6) (HIV-1).